The sequence spans 80 residues: Large ribosomal subunit protein eL20 (80 aa).

It belongs to the eukaryotic ribosomal protein eL20 family. Part of the 50S ribosomal subunit. Binds 23S rRNA.

This is Large ribosomal subunit protein eL20 from Methanopyrus kandleri (strain AV19 / DSM 6324 / JCM 9639 / NBRC 100938).